A 491-amino-acid polypeptide reads, in one-letter code: Cobyric acid synthase (491 aa).

In terms of domain architecture, GATase cobBQ-type spans 250-439 (EVTIAVIRLP…LHGIFDNGAW (190 aa)). Cysteine 331 (nucleophile) is an active-site residue. Histidine 431 is an active-site residue.

It belongs to the CobB/CobQ family. CobQ subfamily.

The protein operates within cofactor biosynthesis; adenosylcobalamin biosynthesis. Its function is as follows. Catalyzes amidations at positions B, D, E, and G on adenosylcobyrinic A,C-diamide. NH(2) groups are provided by glutamine, and one molecule of ATP is hydrogenolyzed for each amidation. The protein is Cobyric acid synthase of Synechococcus sp. (strain ATCC 27144 / PCC 6301 / SAUG 1402/1) (Anacystis nidulans).